Here is a 97-residue protein sequence, read N- to C-terminus: Aspartyl/glutamyl-tRNA(Asn/Gln) amidotransferase subunit C (97 aa).

It belongs to the GatC family. In terms of assembly, heterotrimer of A, B and C subunits.

It catalyses the reaction L-glutamyl-tRNA(Gln) + L-glutamine + ATP + H2O = L-glutaminyl-tRNA(Gln) + L-glutamate + ADP + phosphate + H(+). The enzyme catalyses L-aspartyl-tRNA(Asn) + L-glutamine + ATP + H2O = L-asparaginyl-tRNA(Asn) + L-glutamate + ADP + phosphate + 2 H(+). Functionally, allows the formation of correctly charged Asn-tRNA(Asn) or Gln-tRNA(Gln) through the transamidation of misacylated Asp-tRNA(Asn) or Glu-tRNA(Gln) in organisms which lack either or both of asparaginyl-tRNA or glutaminyl-tRNA synthetases. The reaction takes place in the presence of glutamine and ATP through an activated phospho-Asp-tRNA(Asn) or phospho-Glu-tRNA(Gln). In Anaeromyxobacter sp. (strain K), this protein is Aspartyl/glutamyl-tRNA(Asn/Gln) amidotransferase subunit C.